A 548-amino-acid chain; its full sequence is MAAKDVKFGNEARIKMLRGVNVLADAVKVTLGPKGRNVVLDKSFGAPSITKDGVSVAREIELEDKFENMGAQMVKEVASKANDAAGDGTTTATLLAQSIVNEGLKAVAAGMNPMDLKRGIDKAVISAVEELKHLSVPCSDSKAITQVGTISANADEKVGSLIAEAMEKVGNDGVITVEEGTGLQDELEVVKGMQFDRGYLSPYFINKPETGIVELENPYILMADKKISNVREMLPILESVAKSGKPLLIISEDLEGEALATLVVNSMRGIVKVAAVKAPGFGDRRKAMLQDISILTGGSVISEELAMELEKSTLEDLGQAKRVVISKDTTTIIGGVGEKHSIQSRISQIRQEIQEATSDYDKEKLNERLAKLSGGVAVLKVGAATEVEMKEKKARVEDALHATRAAVEEGVVAGGGVALVRVAGKIADLRGQNEDQNVGIRVALRAMEAPLRQIVSNSGEEPSVVTNNVKDGKGNYGYNAATDEYGDMIDFGILDPTKVTRSALQYAASVAGLMITTECMVTDLPKEDKSSDSSSSPAGGMGGMGGMM.

ATP-binding positions include Thr-30–Pro-33, Lys-51, Asp-87–Thr-91, Gly-415, Asn-479–Ala-481, and Asp-495. The segment at Leu-524–Met-548 is disordered. Residues Gly-539–Met-548 show a composition bias toward gly residues.

The protein belongs to the chaperonin (HSP60) family. As to quaternary structure, forms a cylinder of 14 subunits composed of two heptameric rings stacked back-to-back. Interacts with the co-chaperonin GroES.

The protein resides in the cytoplasm. The enzyme catalyses ATP + H2O + a folded polypeptide = ADP + phosphate + an unfolded polypeptide.. In terms of biological role, together with its co-chaperonin GroES, plays an essential role in assisting protein folding. The GroEL-GroES system forms a nano-cage that allows encapsulation of the non-native substrate proteins and provides a physical environment optimized to promote and accelerate protein folding. The polypeptide is Chaperonin GroEL (Buchnera aphidicola subsp. Acyrthosiphon pisum (strain 5A)).